We begin with the raw amino-acid sequence, 216 residues long: Homeobox-leucine zipper protein ATHB-40 (216 aa).

Positions 28-52 (GEVKQPKRRRKKTKGSVASADGGNG) are disordered. A DNA-binding region (homeobox) is located at residues 52–111 (GLFRKRKLTDEQVNMLEMSFGDEHKLESERKDRLAAELGLDPRQVAVWFQNRRARWKNKR). The interval 112-140 (LEEEYNKLKNSHDNVVVDKCRLESEVIQL) is leucine-zipper.

It belongs to the HD-ZIP homeobox family. Class I subfamily. In terms of tissue distribution, expressed in roots, flowers and siliques.

Its subcellular location is the nucleus. Probable transcription factor. The chain is Homeobox-leucine zipper protein ATHB-40 (ATHB-40) from Arabidopsis thaliana (Mouse-ear cress).